We begin with the raw amino-acid sequence, 362 residues long: Endopolygalacturonase II (362 aa).

The signal sequence occupies residues 1-21; sequence MHSFASLLAYGLAASATLASA. The propeptide occupies 22–27; it reads SPIEAR. A disulfide bond links Cys-30 and Cys-45. Residues 156–186 form a PbH1 1 repeat; that stretch reads ADDITLTDITINNADGDTLGGHNTDAFDVGN. The active-site Proton donor is Asp-201. An intrachain disulfide couples Cys-203 to Cys-219. Residue His-223 is part of the active site. PbH1 repeat units lie at residues 238 to 259, 267 to 289, and 301 to 322; these read VKNVTIEHSTVSNSENAVRIKT, VSEITYSNIVMSGISDYGVVIQQ, and TNGVTITDVKLESVTGTVDSKA. An N-linked (GlcNAc...) (high mannose) asparagine glycan is attached at Asn-240. Disulfide bonds link Cys-329–Cys-334 and Cys-353–Cys-362.

This sequence belongs to the glycosyl hydrolase 28 family.

Its subcellular location is the secreted. It carries out the reaction (1,4-alpha-D-galacturonosyl)n+m + H2O = (1,4-alpha-D-galacturonosyl)n + (1,4-alpha-D-galacturonosyl)m.. Functionally, involved in maceration and soft-rotting of plant tissue. Hydrolyzes the 1,4-alpha glycosidic bonds of de-esterified pectate in the smooth region of the plant cell wall. The protein is Endopolygalacturonase II of Aspergillus niger.